A 178-amino-acid polypeptide reads, in one-letter code: ATP synthase subunit delta (178 aa).

It belongs to the ATPase delta chain family. F-type ATPases have 2 components, F(1) - the catalytic core - and F(0) - the membrane proton channel. F(1) has five subunits: alpha(3), beta(3), gamma(1), delta(1), epsilon(1). F(0) has three main subunits: a(1), b(2) and c(10-14). The alpha and beta chains form an alternating ring which encloses part of the gamma chain. F(1) is attached to F(0) by a central stalk formed by the gamma and epsilon chains, while a peripheral stalk is formed by the delta and b chains.

The protein localises to the cell inner membrane. Functionally, f(1)F(0) ATP synthase produces ATP from ADP in the presence of a proton or sodium gradient. F-type ATPases consist of two structural domains, F(1) containing the extramembraneous catalytic core and F(0) containing the membrane proton channel, linked together by a central stalk and a peripheral stalk. During catalysis, ATP synthesis in the catalytic domain of F(1) is coupled via a rotary mechanism of the central stalk subunits to proton translocation. Its function is as follows. This protein is part of the stalk that links CF(0) to CF(1). It either transmits conformational changes from CF(0) to CF(1) or is implicated in proton conduction. The sequence is that of ATP synthase subunit delta from Pseudomonas syringae pv. syringae (strain B728a).